Reading from the N-terminus, the 437-residue chain is Vasoactive intestinal polypeptide receptor 2 (437 aa).

A signal peptide spans 1-22 (MRASVVLTCYCWLLVRVSSIHP). Residues 23–123 (ECRFHLEIQE…EDESKISFYI (101 aa)) lie on the Extracellular side of the membrane. Disulfide bonds link Cys-37/Cys-60, Cys-51/Cys-92, and Cys-74/Cys-108. N-linked (GlcNAc...) asparagine glycosylation is found at Asn-57, Asn-87, and Asn-91. The chain crosses the membrane as a helical span at residues 124 to 149 (LVKAIYTLGYSVSLMSLTTGSIIICL). Residues 150–157 (FRKLHCTR) are Cytoplasmic-facing. A helical membrane pass occupies residues 158 to 179 (NYIHLNLFLSFMLRAISVLVKD). The Extracellular portion of the chain corresponds to 180-202 (SVLYSSSGLLRCHDQPASWVGCK). Cysteines 201 and 270 form a disulfide. The chain crosses the membrane as a helical span at residues 203–227 (LSLVFFQYCIMANFYWLLVEGLYLH). Residues 228-238 (TLLVAILPPSR) are Cytoplasmic-facing. A helical membrane pass occupies residues 239-260 (CFLAYLLIGWGIPSVCIGAWTA). Residues 261–279 (TRLSLEDTGCWDTNDHSIP) are Extracellular-facing. Residues 280-303 (WWVIRMPILISIVVNFALFISIVR) traverse the membrane as a helical segment. Residues 304-324 (ILLQKLTSPDVGGNDQSQYKR) lie on the Cytoplasmic side of the membrane. Residues 325-345 (LAKSTLLLIPLFGVHYMVFAA) form a helical membrane-spanning segment. At 346 to 353 (FPIGISST) the chain is on the extracellular side. The chain crosses the membrane as a helical span at residues 354 to 377 (YQILFELCVGSFQGLVVAVLYCFL). Residues 378 to 437 (NSEVQCELKRRWRGLCLTQAGSRDYRLHSWSMSRNGSESALQIHRGSRTQSFLQSETSVI) are Cytoplasmic-facing.

Belongs to the G-protein coupled receptor 2 family. As to quaternary structure, interacts with ADCYAP1/PACAP (via N-terminal extracellular domain); activated by PACAP27 and CAPAC38 neuropeptides. Interacts with VIP; the interaction results in VIPR1 activation. As to expression, expressed at high levels in the MIN6 cells, at moderate levels in pancreatic islets, insulin-secreting cells, lung, brain, stomach, and colon, and at low levels in the heart.

It is found in the cell membrane. Its function is as follows. G protein-coupled receptor activated by the neuropeptides vasoactive intestinal peptide (VIP) and pituitary adenylate cyclase-activating polypeptide (ADCYAP1/PACAP). Binds VIP and both PACAP27 and PACAP38 bioactive peptides with the order of ligand affinity of VIP = PACAP38 &gt; PACAP27. Ligand binding causes a conformation change that triggers signaling via guanine nucleotide-binding proteins (G proteins) and modulates the activity of downstream effectors. Activates cAMP-dependent pathway. May be coupled to phospholipase C. This Mus musculus (Mouse) protein is Vasoactive intestinal polypeptide receptor 2.